The following is a 400-amino-acid chain: Subtilisin-like protease CPC735_047380 (400 aa).

Residues 1–19 (MARINVVVSFLAALAVVQA) form the signal peptide. A propeptide spanning residues 20-118 (AQLLNLDGQK…IEPQRTFRAF (99 aa)) is cleaved from the precursor. Residues 35-116 (SYVVVMNDGL…NYIEPQRTFR (82 aa)) enclose the Inhibitor I9 domain. Residues 128–400 (SWGLGRISHT…DKLLYNGSGQ (273 aa)) form the Peptidase S8 domain. Residue Asn153 is glycosylated (N-linked (GlcNAc...) asparagine). Catalysis depends on charge relay system residues Asp160 and His191. N-linked (GlcNAc...) asparagine glycosylation is found at Asn244 and Asn252. The active-site Charge relay system is the Ser346. N-linked (GlcNAc...) asparagine glycosylation is present at Asn396.

It belongs to the peptidase S8 family.

It is found in the secreted. Secreted subtilisin-like serine protease with keratinolytic activity that contributes to pathogenicity. The chain is Subtilisin-like protease CPC735_047380 from Coccidioides posadasii (strain C735) (Valley fever fungus).